We begin with the raw amino-acid sequence, 96 residues long: NADH-ubiquinone oxidoreductase chain 4L (96 aa).

3 helical membrane passes run 1-21, 24-44, and 57-77; these read MNPT…AFYQ, LLSL…LMAI, and LPLI…VLLV.

Belongs to the complex I subunit 4L family.

The protein resides in the mitochondrion membrane. The catalysed reaction is a ubiquinone + NADH + 5 H(+)(in) = a ubiquinol + NAD(+) + 4 H(+)(out). Functionally, core subunit of the mitochondrial membrane respiratory chain NADH dehydrogenase (Complex I) which catalyzes electron transfer from NADH through the respiratory chain, using ubiquinone as an electron acceptor. Part of the enzyme membrane arm which is embedded in the lipid bilayer and involved in proton translocation. This Myxine glutinosa (Atlantic hagfish) protein is NADH-ubiquinone oxidoreductase chain 4L (MT-ND4L).